The chain runs to 503 residues: MSQLKLEEISSVIEEKIKNFELDCDMAEVGKVVSYADGVAKIYGLNGVMSYEVLEFETGDKGVAANLEEDSVGVIVFGFGNNIKEGTSVKRTKSLMKVPVGDAVVGRVLNALGEPIDGKGEIETNEFSLIEQKAPGIMDRKSVHEPLQTGIKAIDALVPIGRGQRELIIGDKQTGKTTVAIDAIINQKGQNVICIYVAIGQKESTVAQVVRKLEEYGAMEYSVVINASASDSAAMQYLAPYAGVAMGEYFRDHARHALIVYDDLSKHAVAYREISWILRRPPGREAFPGDVFYIHSRLLERAAKLCDEKGAGSLTALPIVETQAGDVSAYIPTNIISITDGQIFLETDLFYSGIRPAINVGLSVSRVGGAAQIKATKQVSGTLRLDLAQYRELQAFTQFASDLDEASKKQLERGQRMVEVLKQAPYSPLPIEKQVVIIYAGAKGFLDSVSVKKVVDFEEQLHPFLEAKYPQVLEEIHTKKVLDKDLEAMLRKVLEEFKLTYSE.

Residue 170–177 coordinates ATP; that stretch reads GDKQTGKT.

This sequence belongs to the ATPase alpha/beta chains family. In terms of assembly, F-type ATPases have 2 components, CF(1) - the catalytic core - and CF(0) - the membrane proton channel. CF(1) has five subunits: alpha(3), beta(3), gamma(1), delta(1), epsilon(1). CF(0) has three main subunits: a(1), b(2) and c(9-12). The alpha and beta chains form an alternating ring which encloses part of the gamma chain. CF(1) is attached to CF(0) by a central stalk formed by the gamma and epsilon chains, while a peripheral stalk is formed by the delta and b chains.

The protein resides in the cell inner membrane. It catalyses the reaction ATP + H2O + 4 H(+)(in) = ADP + phosphate + 5 H(+)(out). Its function is as follows. Produces ATP from ADP in the presence of a proton gradient across the membrane. The alpha chain is a regulatory subunit. This Helicobacter pylori (strain J99 / ATCC 700824) (Campylobacter pylori J99) protein is ATP synthase subunit alpha.